Reading from the N-terminus, the 1959-residue chain is Sodium channel protein type 10 subunit alpha (1959 aa).

Over 1-125 (MEFPIGSVGT…FNLIRRTAIK (125 aa)) the chain is Cytoplasmic. A disordered region spans residues 30–53 (AHGAAKKARAKHGERKGQDEKPRP). Residues 33–43 (AAKKARAKHGE) are compositionally biased toward basic residues. Residues 44–53 (RKGQDEKPRP) are compositionally biased toward basic and acidic residues. An I repeat occupies 116 to 404 (FNLIRRTAIK…VTMAYEEQNQ (289 aa)). Residues 126-149 (VSVHAWFSIFITITILFNCVCMTQ) traverse the membrane as a helical segment. At 150-154 (NDLPE) the chain is on the extracellular side. Residues 155–174 (KIEYAFTVIYTFEALIKILA) traverse the membrane as a helical segment. The Cytoplasmic portion of the chain corresponds to 175-187 (RGFCLNEFTYLRD). Residues 188-206 (PWNWLDFSVITLAYVGAAI) form a helical membrane-spanning segment. The Extracellular portion of the chain corresponds to 207–212 (DLRGIS). A helical; Voltage-sensor membrane pass occupies residues 213 to 232 (GLRTFRVLRALKTVSVIPGL). Over 233 to 248 (KVIVGALIHSVRKLAD) the chain is Cytoplasmic. A helical membrane pass occupies residues 249-272 (VTILTVFCLSVFALVGLQLFKGNL). Topologically, residues 273 to 340 (KNKCIKRSTD…PDFNYTSFDS (68 aa)) are extracellular. Cys-276 and Cys-318 are disulfide-bonded. Asn-288, Asn-311, and Asn-334 each carry an N-linked (GlcNAc...) asparagine glycan. An intramembrane region (pore-forming) is located at residues 341 to 365 (FAWAFLSLFRLMTQDSWERLYQQTL). The Extracellular segment spans residues 366–372 (RASGKMY). The chain crosses the membrane as a helical span at residues 373-398 (MVFFVLVIFLGSFYLVNLILAVVTMA). Topologically, residues 399 to 659 (YEEQNQATIA…KWMKFKMVLF (261 aa)) are cytoplasmic. Phosphoserine occurs at positions 440, 443, 466, and 478. Disordered stretches follow at residues 442 to 484 (HSHN…YNQR) and 510 to 578 (SQDV…ELTT). Over residues 475–484 (SPQSDPYNQR) the composition is skewed to polar residues. Residues 523–533 (GVFHGDHESHR) show a composition bias toward basic and acidic residues. Phosphoserine occurs at positions 612 and 615. The stretch at 647–911 (CCPKWMKFKM…EDDGEVNNLQ (265 aa)) is one II repeat. Residues 660–684 (ELVTDPFAELTITLCIVVNTIFMAM) traverse the membrane as a helical segment. Topologically, residues 685–695 (EHYPMTDAFDA) are extracellular. The helical transmembrane segment at 696 to 719 (MLQAGNIVFTVFFTMEMAFKIIAF) threads the bilayer. Topologically, residues 720 to 727 (DPYYYFQK) are cytoplasmic. A helical membrane pass occupies residues 728-747 (KWNVFDCVIVTVSLLELSIA). Residues 748–753 (KKGSLS) are Extracellular-facing. The chain crosses the membrane as a helical; Voltage-sensor span at residues 754–773 (VLRTFRLLRVFKLAKSWPTL). Over 774–789 (NTLIKIIGNSVGALGN) the chain is Cytoplasmic. A helical transmembrane segment spans residues 790 to 810 (LTFILAIIVFIFALVGKQLLG). At 811-834 (EDYGCRKDGTALWNEGQLRWHMCD) the chain is on the extracellular side. Positions 835–855 (FFHSFLVIFRILCGEWIENMW) form an intramembrane region, pore-forming. Residues 856-864 (VCMQVSEKS) lie on the Extracellular side of the membrane. Residues Cys-857 and Cys-866 are joined by a disulfide bond. A helical membrane pass occupies residues 865 to 890 (ICLILFLTVMVLGNLVVLNLFIALLL). The Cytoplasmic segment spans residues 891–1149 (NSFSADNLTA…GWQVRKTCYR (259 aa)). Over residues 1004-1016 (GESDLDELEEDIE) the composition is skewed to acidic residues. Disordered regions lie at residues 1004–1034 (GESD…QQDQ) and 1071–1097 (ATPQ…PDPE). Residues 1142-1451 (QVRKTCYRIV…KKYYNAMKKL (310 aa)) form an III repeat. The helical transmembrane segment at 1150-1173 (IVEHSWFESFIIFMILLSSGALAF) threads the bilayer. At 1174–1186 (EDNYLEQKPRVKS) the chain is on the extracellular side. Residues 1187-1212 (MLEYTDRVFTFIFVFEMLLKWVAYGF) form a helical membrane-spanning segment. Topologically, residues 1213-1218 (KKYFTN) are cytoplasmic. Residues 1219-1240 (AWCWLDFLIVNISLTSLIAKIL) traverse the membrane as a helical segment. Over 1241 to 1244 (DYSD) the chain is Extracellular. A helical; Voltage-sensor transmembrane segment spans residues 1245–1266 (VASLKALRTLRALRPLRALSRF). The Cytoplasmic portion of the chain corresponds to 1267-1285 (EGMRVVVDALVGAIPSIMN). Residues 1286-1313 (VLLVCLIFWLIFSIMGVNLFAGKFSRCI) traverse the membrane as a helical segment. At 1314 to 1355 (DTSNNPFSVVNSTIVNNKSECRNQNHTGHFFWVNVKVNFDNV) the chain is on the extracellular side. The segment at residues 1356-1377 (AMGYLALLQVATFKGWMDIMYA) is an intramembrane region (pore-forming). The Extracellular segment spans residues 1378-1393 (AVDSREINSQPQWEDN). Residues 1394-1420 (LYMYLYFVVFIIFGGFFTLNLFVGVII) form a helical membrane-spanning segment. At 1421-1473 (DNFNQQKKKLGGQDIFMTEEQKKYYNAMKKLGSKKPQKPIPRPLNKYQGFVFD) the chain is on the cytoplasmic side. Phosphoserine; by PKC is present on Ser-1453. An IV repeat occupies 1460 to 1759 (IPRPLNKYQG…WEKFDPEATQ (300 aa)). A helical transmembrane segment spans residues 1474–1497 (IVTRQAFDIIIMVLICLNMITMMV). Residues 1498–1508 (ETDGQSEEKTK) are Extracellular-facing. Residues 1509-1532 (ILGRINQFFVAVFTGECVMKMFAL) traverse the membrane as a helical segment. The Cytoplasmic portion of the chain corresponds to 1533 to 1538 (RQYYFT). Residues 1539–1562 (NGWNVFDFIVVILSIGSLVFSAIL) form a helical membrane-spanning segment. The Extracellular segment spans residues 1563–1574 (KSLESYFSPTLF). Residues 1575-1596 (RVIRLARIGRILRLIRAAKGIR) traverse the membrane as a helical; Voltage-sensor segment. Topologically, residues 1597-1611 (TLLFALMMSLPALFN) are cytoplasmic. Residues 1612–1634 (IGLLLFLVMFIYSIFGMASFANV) traverse the membrane as a helical segment. Over 1635–1648 (VEEAGIDDMFNFQT) the chain is Extracellular. Positions 1649-1671 (FGNSMLCLFQITTSAGWDGLLSP) form an intramembrane region, pore-forming. Topologically, residues 1672-1699 (ILNTGPPYCDPNLSNNNTSKGNCGSPTV) are extracellular. Residues 1700-1724 (GIVFFTTYIIISFLIVVNMYIAVIL) form a helical membrane-spanning segment. The Cytoplasmic portion of the chain corresponds to 1725–1959 (ENFNVATEES…SKEGDSPGPQ (235 aa)). One can recognise an IQ domain in the interval 1853–1882 (EDISATVIQKAYRSYVLQRSLTLSNPLRVP). Residues 1901-1959 (ANDSGRLPDKSETTSATSFPPSYDSVTRGLSDRVNISTSNSMHNEDEVTSKEGDSPGPQ) form a disordered region. Residues 1943 to 1959 (HNEDEVTSKEGDSPGPQ) show a composition bias toward basic and acidic residues.

Belongs to the sodium channel (TC 1.A.1.10) family. Nav1.8/SCN10A subfamily. As to quaternary structure, the channel consists of an ion conducting pore forming alpha-subunit regulated by one or more associated auxiliary subunits SCN1B, SCN2B and SCN3B; electrophysiological properties may vary depending on the type of the associated beta subunits. Found in a number of complexes with PRX, DYNLT1 and PDZD2. Interacts with proteins such as FSTL1, PRX, DYNLT1, PDZD2, S100A10 and many others. Interacts with NEDD4 and NEDD4L. In terms of processing, ubiquitinated by NEDD4L; which promotes its endocytosis. Phosphorylation at Ser-1453 by PKC in a highly conserved cytoplasmic loop slows inactivation of the sodium channel and reduces peak sodium currents. Post-translationally, lacks the cysteine which covalently binds the conotoxin GVIIJ. This cysteine (position 816) is speculated in other sodium channel subunits alpha to be implied in covalent binding with the sodium channel subunit beta-2 or beta-4.

Its subcellular location is the cell membrane. The enzyme catalyses Na(+)(in) = Na(+)(out). Its function is as follows. Tetrodotoxin-resistant channel that mediates the voltage-dependent sodium ion permeability of excitable membranes. Assuming opened or closed conformations in response to the voltage difference across the membrane, the protein forms a sodium-selective channel through which sodium ions may pass in accordance with their electrochemical gradient. Plays a role in neuropathic pain mechanisms. This Onychomys torridus (Southern grasshopper mouse) protein is Sodium channel protein type 10 subunit alpha (Scn10a).